The following is a 172-amino-acid chain: RNA silencing suppressor p19 (172 aa).

Disordered regions lie at residues 1–38 (MEGA…ESPG) and 152–172 (VEGN…KESE). 2 stretches are compositionally biased toward basic and acidic residues: residues 9 to 20 (DAREQANSERWD) and 159 to 172 (GRPE…KESE).

This sequence belongs to the tombusvirus protein p19 family. As to quaternary structure, homodimer.

Functionally, viral suppressor of RNA silencing which binds specifically to silencing RNAs (siRNAs). Acts as a molecular caliper to specifically select siRNAs based on the length of the duplex region of the RNA. In Havel river virus (HaRV), this protein is RNA silencing suppressor p19.